The chain runs to 364 residues: Cobalt-precorrin-5B C(1)-methyltransferase (364 aa).

Belongs to the CbiD family.

It carries out the reaction Co-precorrin-5B + S-adenosyl-L-methionine = Co-precorrin-6A + S-adenosyl-L-homocysteine. It functions in the pathway cofactor biosynthesis; adenosylcobalamin biosynthesis; cob(II)yrinate a,c-diamide from sirohydrochlorin (anaerobic route): step 6/10. Functionally, catalyzes the methylation of C-1 in cobalt-precorrin-5B to form cobalt-precorrin-6A. This Thermoplasma acidophilum (strain ATCC 25905 / DSM 1728 / JCM 9062 / NBRC 15155 / AMRC-C165) protein is Cobalt-precorrin-5B C(1)-methyltransferase.